A 78-amino-acid polypeptide reads, in one-letter code: Acyl carrier protein (78 aa).

The Carrier domain occupies 2 to 77; sequence SDIAERVKKI…DAIKFLEKNS (76 aa). An O-(pantetheine 4'-phosphoryl)serine modification is found at S37.

Belongs to the acyl carrier protein (ACP) family. In terms of processing, 4'-phosphopantetheine is transferred from CoA to a specific serine of apo-ACP by AcpS. This modification is essential for activity because fatty acids are bound in thioester linkage to the sulfhydryl of the prosthetic group.

Its subcellular location is the cytoplasm. It functions in the pathway lipid metabolism; fatty acid biosynthesis. Carrier of the growing fatty acid chain in fatty acid biosynthesis. This Methylorubrum extorquens (strain CM4 / NCIMB 13688) (Methylobacterium extorquens) protein is Acyl carrier protein.